The chain runs to 323 residues: uncharacterized protein (323 aa).

Disordered regions lie at residues 185-214 and 271-294; these read AELMKSEDSPEKDEETLRREERKQKEGSSW and GNIISQKDNPPKSDSDDEDDYEKL.

The protein belongs to the IGBP1/TAP42 family.

This is an uncharacterized protein from Schizosaccharomyces pombe (strain 972 / ATCC 24843) (Fission yeast).